We begin with the raw amino-acid sequence, 525 residues long: GMP synthase [glutamine-hydrolyzing] (525 aa).

Residues 13–202 enclose the Glutamine amidotransferase type-1 domain; it reads TILVLDFGSQ…AVDLCHAKQN (190 aa). The active-site Nucleophile is the cysteine 89. Active-site residues include histidine 176 and glutamate 178. One can recognise a GMPS ATP-PPase domain in the interval 203–400; the sequence is WTMENFIDTE…LGIPHDLVWR (198 aa). 231 to 237 lines the ATP pocket; that stretch reads SGGVDST. Residue lysine 241 forms a Glycyl lysine isopeptide (Lys-Gly) (interchain with G-Cter in ubiquitin) linkage. XMP is bound at residue arginine 304. Residue lysine 426 forms a Glycyl lysine isopeptide (Lys-Gly) (interchain with G-Cter in ubiquitin) linkage. The XMP site is built by aspartate 462, lysine 517, and glutamate 523.

In terms of assembly, homodimer. Mg(2+) serves as cofactor.

The protein resides in the cytoplasm. The protein localises to the cytosol. The catalysed reaction is XMP + L-glutamine + ATP + H2O = GMP + L-glutamate + AMP + diphosphate + 2 H(+). It participates in purine metabolism; GMP biosynthesis; GMP from XMP (L-Gln route): step 1/1. Its function is as follows. Catalyzes the conversion of xanthine monophosphate (XMP) to GMP in the presence of glutamine and ATP through an adenyl-XMP intermediate. This is GMP synthase [glutamine-hydrolyzing] from Saccharomyces cerevisiae (strain ATCC 204508 / S288c) (Baker's yeast).